The primary structure comprises 128 residues: Large ribosomal subunit protein bL21 (128 aa).

Residues 104 to 128 (GKSPSVGPRPKRVKAEPAPAADAAE) are disordered. Low complexity predominate over residues 119–128 (EPAPAADAAE).

Belongs to the bacterial ribosomal protein bL21 family. As to quaternary structure, part of the 50S ribosomal subunit. Contacts protein L20.

Functionally, this protein binds to 23S rRNA in the presence of protein L20. In Rhodopseudomonas palustris (strain HaA2), this protein is Large ribosomal subunit protein bL21.